The sequence spans 183 residues: MSKNEKLSAEEKALFRGLMSGTRQLSQDTIVHKPPRKKFNQVPVKRLLSEQMDASHYFSDEFQPLLASEGAVRYVRSDVSHYELKKLRRGDFTPEIFLDLHGLTQKQAKQELGALIAACRREHIFCASVMHGHGKHILKQQTPLWLAQHPWVMAFHQAPKLFGGDAALLVLIEVEEWLPPELP.

The Smr domain occupies 98–173; sequence LDLHGLTQKQ…GDAALLVLIE (76 aa).

The protein belongs to the SmrB family. In terms of assembly, associates with collided ribosomes, but not with correctly translating polysomes.

Functionally, acts as a ribosome collision sensor. Detects stalled/collided disomes (pairs of ribosomes where the leading ribosome is stalled and a second ribosome has collided with it) and endonucleolytically cleaves mRNA at the 5' boundary of the stalled ribosome. Stalled/collided disomes form a new interface (primarily via the 30S subunits) that binds SmrB. Cleaved mRNA becomes available for tmRNA ligation, leading to ribosomal subunit dissociation and rescue of stalled ribosomes. This is Ribosome rescue factor SmrB from Erwinia tasmaniensis (strain DSM 17950 / CFBP 7177 / CIP 109463 / NCPPB 4357 / Et1/99).